The sequence spans 164 residues: V-type proton ATPase subunit c3 (164 aa).

Residues 1 to 11 (MSTFSGDETAP) lie on the Lumenal side of the membrane. The chain crosses the membrane as a helical span at residues 12–32 (FFGFLGAAAALVFSCMGAAYG). The Cytoplasmic segment spans residues 33-54 (TAKSGVGVASMGVMRPELVMKS). The chain crosses the membrane as a helical span at residues 55–75 (IVPVVMAGVLGIYGLIIAVII). Over 76 to 94 (STGINPKAKSYYLFDGYAH) the chain is Lumenal. Residues 95-116 (LSSGLACGLAGLSAGMAIGIVG) form a helical membrane-spanning segment. Over 117 to 128 (DAGVRANAQQPK) the chain is Cytoplasmic. Residues 129–154 (LFVGMILILIFAEALALYGLIVGIIL) traverse the membrane as a helical segment. Residues 155-164 (SSRAGQSRAE) lie on the Lumenal side of the membrane.

Belongs to the V-ATPase proteolipid subunit family. V-ATPase is a heteromultimeric enzyme composed of a peripheral catalytic V1 complex (components A to H) attached to an integral membrane V0 proton pore complex (components: a, c, c'', d and e). The proteolipid components c and c'' are present as a hexameric ring that forms the proton-conducting pore. As to expression, expressed in leaf, root, flower and silique.

It localises to the vacuole membrane. In terms of biological role, proton-conducting pore forming subunit of the membrane integral V0 complex of vacuolar ATPase. V-ATPase is responsible for acidifying a variety of intracellular compartments in eukaryotic cells. This chain is V-type proton ATPase subunit c3 (VHA-c3), found in Arabidopsis thaliana (Mouse-ear cress).